We begin with the raw amino-acid sequence, 47 residues long: Potamin-1 (47 aa).

3 disulfide bridges follow: Cys-3-Cys-40, Cys-6-Cys-24, and Cys-7-Cys-36.

Its function is as follows. Inhibitor of serine proteases chymotrypsin, papain and trypsin. Has strong antifungal activity against C.albicans and R.solani. Has antibacterial activity against the Gram-positive bacterium C.michiganense, but lacks antibacterial activity against the Gram-positive bacterium S.aureus. Lacks hemolytic activity against human erythrocytes. The chain is Potamin-1 from Solanum tuberosum (Potato).